A 460-amino-acid chain; its full sequence is ATP synthase subunit beta (460 aa).

150 to 157 serves as a coordination point for ATP; that stretch reads GGAGVGKT.

It belongs to the ATPase alpha/beta chains family. As to quaternary structure, F-type ATPases have 2 components, CF(1) - the catalytic core - and CF(0) - the membrane proton channel. CF(1) has five subunits: alpha(3), beta(3), gamma(1), delta(1), epsilon(1). CF(0) has three main subunits: a(1), b(2) and c(9-12). The alpha and beta chains form an alternating ring which encloses part of the gamma chain. CF(1) is attached to CF(0) by a central stalk formed by the gamma and epsilon chains, while a peripheral stalk is formed by the delta and b chains.

Its subcellular location is the cell inner membrane. It carries out the reaction ATP + H2O + 4 H(+)(in) = ADP + phosphate + 5 H(+)(out). Produces ATP from ADP in the presence of a proton gradient across the membrane. The catalytic sites are hosted primarily by the beta subunits. The polypeptide is ATP synthase subunit beta (Erwinia tasmaniensis (strain DSM 17950 / CFBP 7177 / CIP 109463 / NCPPB 4357 / Et1/99)).